The following is a 245-amino-acid chain: MRVGVLGAKGKVGATMVRAVAAADDLTLSAELDAGDPLSLLTDGNTEVVIDFTHPDVVMGNLEFLIDNGIHAVVGTTGFTAERFQQVESWLVAKPNTSVLIAPNFAIGAVLSMHFAKQAARFFDSAEVIELHHPHKADAPSGTAARTAKLIAEARKGLPPNPDATSTSLPGARGADVDGIPVHAVRLAGLVAHQEVLFGTEGEILTIRHDSLDRTSFVPGVLLAVRRIAERPGLTVGLEPLLDLH.

Residues 7–12, 75–77, and 102–105 each bind NAD(+); these read GAKGKV, GTT, and APNF. The active-site Proton donor/acceptor is the His-132. A (S)-2,3,4,5-tetrahydrodipicolinate-binding site is contributed by His-133. Residue Lys-136 is the Proton donor of the active site. A (S)-2,3,4,5-tetrahydrodipicolinate-binding site is contributed by 142-143; sequence GT.

It belongs to the DapB family.

The protein localises to the cytoplasm. The enzyme catalyses (S)-2,3,4,5-tetrahydrodipicolinate + NAD(+) + H2O = (2S,4S)-4-hydroxy-2,3,4,5-tetrahydrodipicolinate + NADH + H(+). It catalyses the reaction (S)-2,3,4,5-tetrahydrodipicolinate + NADP(+) + H2O = (2S,4S)-4-hydroxy-2,3,4,5-tetrahydrodipicolinate + NADPH + H(+). The protein operates within amino-acid biosynthesis; L-lysine biosynthesis via DAP pathway; (S)-tetrahydrodipicolinate from L-aspartate: step 4/4. In terms of biological role, catalyzes the conversion of 4-hydroxy-tetrahydrodipicolinate (HTPA) to tetrahydrodipicolinate. The sequence is that of 4-hydroxy-tetrahydrodipicolinate reductase from Mycobacterium bovis (strain BCG / Pasteur 1173P2).